Reading from the N-terminus, the 315-residue chain is UDP-N-acetylenolpyruvoylglucosamine reductase (315 aa).

The FAD-binding PCMH-type domain maps to 27 to 207 (RVGGPADVLY…TKRMNAITAR (181 aa)). Arg172 is a catalytic residue. Positions 214 to 236 (IREKTSGSTFANPDPPGTPNQRK) are disordered. Ser221 acts as the Proton donor in catalysis. Residue Glu297 is part of the active site.

The protein belongs to the MurB family. Requires FAD as cofactor.

The protein resides in the cytoplasm. It catalyses the reaction UDP-N-acetyl-alpha-D-muramate + NADP(+) = UDP-N-acetyl-3-O-(1-carboxyvinyl)-alpha-D-glucosamine + NADPH + H(+). It participates in cell wall biogenesis; peptidoglycan biosynthesis. Cell wall formation. This Maricaulis maris (strain MCS10) (Caulobacter maris) protein is UDP-N-acetylenolpyruvoylglucosamine reductase.